We begin with the raw amino-acid sequence, 307 residues long: Transposase InsD for insertion element IS2-9 (307 aa).

Residues Lys-112 to Ala-295 form the Integrase catalytic domain.

Its function is as follows. Involved in the transposition of the insertion sequence IS2. This chain is Transposase InsD for insertion element IS2-9, found in Escherichia coli (strain K12).